Reading from the N-terminus, the 459-residue chain is MLKIFNTLTREKEIFKPIHENKVGMYVCGVTVYDLCHIGHGRTFVCFDVIARYLRSLGYDLTYVRNITDVDDKIIKRALENKETCDQLVDRMVQEMYKDFDALNVLRPDFEPRATHHIPEIIEIVEKLIKRGHAYVADNGDVMFDVESFKEYGKLSRQDLEQLQAGARIEINEIKKNPMDFVLWKMSKENEPSWASPWGAGRPGWHIECSAMNCKQLGEYFDIHGGGSDLMFPHHENEIAQSCCAHGGQYVNYWIHSGMIMVDKEKMSKSLGNFFTIRDVLNHYNAEAVRYFLLTAHYRSQLNYSEENLNLAQGALERLYTALRGTDQSAVAFGGENFVATFREAMDDDFNTPNALSVLFEMAREINKLKTEDVEKANGLAARLRELGAILGLLQQEPEKFLQAGSNDDEVAKIEALIKQRNEARTAKDWSAADSARNELTAMGIVLEDGPNGTTWRKQ.

Cys28 lines the Zn(2+) pocket. Residues 30–40 (VTVYDLCHIGH) carry the 'HIGH' region motif. Positions 209, 234, and 238 each coordinate Zn(2+). Residues 266–270 (KMSKS) carry the 'KMSKS' region motif. Lys269 provides a ligand contact to ATP.

It belongs to the class-I aminoacyl-tRNA synthetase family. Monomer. Zn(2+) is required as a cofactor.

It localises to the cytoplasm. It catalyses the reaction tRNA(Cys) + L-cysteine + ATP = L-cysteinyl-tRNA(Cys) + AMP + diphosphate. This is Cysteine--tRNA ligase (cysS) from Haemophilus influenzae (strain ATCC 51907 / DSM 11121 / KW20 / Rd).